Here is a 211-residue protein sequence, read N- to C-terminus: Large ribosomal subunit protein uL4 (211 aa).

The interval 40–85 is disordered; it reads QQAHSRQGTASTLTRSEVRGGGRKPYKQKGTGRARQGSIRTPLRPG. Residues 41–54 show a composition bias toward polar residues; it reads QAHSRQGTASTLTR. A compositionally biased stretch (basic residues) spans 60–71; it reads GGRKPYKQKGTG.

This sequence belongs to the universal ribosomal protein uL4 family. In terms of assembly, part of the 50S ribosomal subunit.

Functionally, one of the primary rRNA binding proteins, this protein initially binds near the 5'-end of the 23S rRNA. It is important during the early stages of 50S assembly. It makes multiple contacts with different domains of the 23S rRNA in the assembled 50S subunit and ribosome. Its function is as follows. Forms part of the polypeptide exit tunnel. The protein is Large ribosomal subunit protein uL4 of Prochlorococcus marinus (strain NATL2A).